A 49-amino-acid polypeptide reads, in one-letter code: Large ribosomal subunit protein bL33 (49 aa).

A disordered region spans residues 18–49 (ITTKNKRNNPERLELKKYSPRLKRTTLHRETK). A compositionally biased stretch (basic and acidic residues) spans 25–34 (NNPERLELKK).

The protein belongs to the bacterial ribosomal protein bL33 family.

The polypeptide is Large ribosomal subunit protein bL33 (Lysinibacillus sphaericus (strain C3-41)).